The chain runs to 280 residues: Ribosomal RNA small subunit methyltransferase A (280 aa).

Residues H15, L17, G42, E64, D89, and N109 each coordinate S-adenosyl-L-methionine.

This sequence belongs to the class I-like SAM-binding methyltransferase superfamily. rRNA adenine N(6)-methyltransferase family. RsmA subfamily.

The protein localises to the cytoplasm. It catalyses the reaction adenosine(1518)/adenosine(1519) in 16S rRNA + 4 S-adenosyl-L-methionine = N(6)-dimethyladenosine(1518)/N(6)-dimethyladenosine(1519) in 16S rRNA + 4 S-adenosyl-L-homocysteine + 4 H(+). Its function is as follows. Specifically dimethylates two adjacent adenosines (A1518 and A1519) in the loop of a conserved hairpin near the 3'-end of 16S rRNA in the 30S particle. May play a critical role in biogenesis of 30S subunits. In Prochlorococcus marinus (strain MIT 9313), this protein is Ribosomal RNA small subunit methyltransferase A.